The primary structure comprises 454 residues: Oxygen-dependent coproporphyrinogen-III oxidase, mitochondrial (454 aa).

The N-terminal 110 residues, 1–110 (MALQLGRLSS…MLPKTSGTRA (110 aa)), are a transit peptide targeting the mitochondrion. A disordered region spans residues 43 to 70 (AAGRVCRPPGPAGTEQSRGLGHGSTSRG). Position 112 is a phosphoserine (Ser112). The tract at residues 193-202 (VLQDGCVFEK) is important for dimerization. Ser244 lines the coproporphyrinogen III pocket. His258 acts as the Proton donor in catalysis. 260-262 (NYR) is a coproporphyrinogen III binding site. Positions 392–428 (YVEFNLLYDRGTKFGLFTPGSRIESILMSLPLTARWE) are important for dimerization. N6-acetyllysine; alternate is present on Lys404. Residue Lys404 is modified to N6-succinyllysine; alternate. 411 to 413 (GSR) contributes to the coproporphyrinogen III binding site.

It belongs to the aerobic coproporphyrinogen-III oxidase family. As to quaternary structure, homodimer.

It is found in the mitochondrion intermembrane space. The enzyme catalyses coproporphyrinogen III + O2 + 2 H(+) = protoporphyrinogen IX + 2 CO2 + 2 H2O. It functions in the pathway porphyrin-containing compound metabolism; protoporphyrin-IX biosynthesis; protoporphyrinogen-IX from coproporphyrinogen-III (O2 route): step 1/1. Its function is as follows. Catalyzes the aerobic oxidative decarboxylation of propionate groups of rings A and B of coproporphyrinogen-III to yield the vinyl groups in protoporphyrinogen-IX and participates to the sixth step in the heme biosynthetic pathway. The chain is Oxygen-dependent coproporphyrinogen-III oxidase, mitochondrial from Homo sapiens (Human).